Reading from the N-terminus, the 394-residue chain is Salivary plasminogen activator gamma (394 aa).

Residues 1–36 form the signal peptide; the sequence is MVNTMKTKLLCVLLLCGAVFSLPRQETYRQLARGSR. The region spanning 45–126 is the Kringle domain; it reads CYKDQGVTYR…TSESCSVPVC (82 aa). Disulfide bonds link C45–C126, C66–C108, C97–C121, C131–C262, C174–C190, C182–C251, C276–C351, C308–C324, and C341–C369. The Peptidase S1 domain maps to 143 to 393; it reads STGGLFTDIT…YLGWIRDNMR (251 aa). Residues H189 and D238 each act as charge relay system in the active site. N-linked (GlcNAc...) asparagine glycosylation occurs at N315. S345 acts as the Charge relay system in catalysis.

This sequence belongs to the peptidase S1 family. Monomer.

It is found in the secreted. The enzyme catalyses Specific cleavage of Arg-|-Val bond in plasminogen to form plasmin.. Probably essential to support the feeding habits of this exclusively haematophagous animal. Probable potent thrombolytic agent. This chain is Salivary plasminogen activator gamma, found in Desmodus rotundus (Vampire bat).